Reading from the N-terminus, the 205-residue chain is MQAPPSFYEGDTLEVAKKLLGQKLVHIVNGIKRSGIIVEVEAYKGPDDKAAHSYGGRRTDRTEVMFGAPGHAYVYLIYGMYHCFNVITAPVGTPQGVLIRALEPVDGIEEIKLARYNKTDITKAQYKNLTNGPGKLCRALGITLEERGVSLQSDTLHIELVREEEHISSQYKITAGPRINIDYAEEAIHYPWRFYYEGHPFVSKK.

It belongs to the DNA glycosylase MPG family.

The sequence is that of Putative 3-methyladenine DNA glycosylase from Bacillus cereus (strain AH187).